The following is a 111-amino-acid chain: Small ribosomal subunit protein uS10 (111 aa).

The protein belongs to the universal ribosomal protein uS10 family. As to quaternary structure, part of the 30S ribosomal subunit.

Functionally, involved in the binding of tRNA to the ribosomes. In Xanthomonas euvesicatoria pv. vesicatoria (strain 85-10) (Xanthomonas campestris pv. vesicatoria), this protein is Small ribosomal subunit protein uS10.